The chain runs to 498 residues: ATP synthase subunit beta, chloroplastic (498 aa).

172-179 serves as a coordination point for ATP; that stretch reads GGAGVGKT.

It belongs to the ATPase alpha/beta chains family. In terms of assembly, F-type ATPases have 2 components, CF(1) - the catalytic core - and CF(0) - the membrane proton channel. CF(1) has five subunits: alpha(3), beta(3), gamma(1), delta(1), epsilon(1). CF(0) has four main subunits: a(1), b(1), b'(1) and c(9-12).

It localises to the plastid. It is found in the chloroplast thylakoid membrane. The catalysed reaction is ATP + H2O + 4 H(+)(in) = ADP + phosphate + 5 H(+)(out). Its function is as follows. Produces ATP from ADP in the presence of a proton gradient across the membrane. The catalytic sites are hosted primarily by the beta subunits. The sequence is that of ATP synthase subunit beta, chloroplastic from Solanum tuberosum (Potato).